The primary structure comprises 332 residues: MSASSLPLPQGKSVSLKQFVSRHINEIGLLVVIAILYLVFSLNAPGFISLNNQMNVLRDAATIGIAAWAMTLIIISGEIDVSVGPMVAFVSVCLAFLLQFEVPLAVACLLVLLLGALMGTLAGVLRGVFNVPSFVATLGLWSALRGMGLFMTNALPVPIDENEVLDWLGGQFLGVPVSALIMIVLFALFVFISRKTAFGRSVFAVGGNATAAQLCGINVRRVRILIFTLSGLLAAVTGILLAARLGSGNAGAANGLEFDVIAAVVVGGTALSGGRGSLFGTLLGVLVITLIGNGLVLLGINSFFQQVVRGVIIVVAVLANILLTQRSSKAKR.

Helical transmembrane passes span 28-48 (GLLV…PGFI), 63-83 (IGIA…DVSV), 84-104 (GPMV…EVPL), 105-125 (AVAC…AGVL), 131-151 (VPSF…GLFM), 172-192 (FLGV…FVFI), 222-242 (VRIL…ILLA), 251-271 (GAAN…GTAL), 278-298 (LFGT…LVLL), and 303-323 (FFQQ…NILL).

This sequence belongs to the binding-protein-dependent transport system permease family. AraH/RbsC subfamily.

It localises to the cell inner membrane. Functionally, probably part of the binding-protein-dependent transport system YphDEF. Probably responsible for the translocation of the substrate across the membrane. The protein is Probable ABC transporter permease protein YphD (yphD) of Escherichia coli (strain K12).